A 169-amino-acid chain; its full sequence is Probable phospholipid hydroperoxide glutathione peroxidase (169 aa).

Residue cysteine 43 is part of the active site.

It belongs to the glutathione peroxidase family. Germinating seed, apex, flower, as well as in stressed tissues.

The protein resides in the cytoplasm. It catalyses the reaction a hydroperoxy polyunsaturated fatty acid + 2 glutathione = a hydroxy polyunsaturated fatty acid + glutathione disulfide + H2O. Protects cells and enzymes from oxidative damage, by catalyzing the reduction of hydrogen peroxide, lipid peroxides and organic hydroperoxide, by glutathione. In Nicotiana sylvestris (Wood tobacco), this protein is Probable phospholipid hydroperoxide glutathione peroxidase.